Here is a 55-residue protein sequence, read N- to C-terminus: Photosystem II reaction center X protein (55 aa).

The chain crosses the membrane as a helical span at residues 24-44 (IGSFLAAAALIVVPAASFLLW).

This sequence belongs to the PsbX family. Type 2 subfamily. In terms of assembly, PSII consists of a core antenna complex that captures photons, and an electron transfer chain that converts photonic excitation into a charge separation. PSII forms dimeric complexes.

It is found in the cellular thylakoid membrane. In terms of biological role, involved in the binding and/or turnover of quinones at the Q(B) site of Photosystem II. The protein is Photosystem II reaction center X protein of Prochlorococcus marinus (strain SARG / CCMP1375 / SS120).